Consider the following 300-residue polypeptide: NAD kinase (300 aa).

The Proton acceptor role is filled by aspartate 80. NAD(+)-binding positions include 80–81, 154–155, arginine 165, arginine 182, aspartate 184, 195–200, and glutamine 253; these read DG, ND, and TAYALS.

Belongs to the NAD kinase family. A divalent metal cation serves as cofactor.

The protein resides in the cytoplasm. It carries out the reaction NAD(+) + ATP = ADP + NADP(+) + H(+). Functionally, involved in the regulation of the intracellular balance of NAD and NADP, and is a key enzyme in the biosynthesis of NADP. Catalyzes specifically the phosphorylation on 2'-hydroxyl of the adenosine moiety of NAD to yield NADP. The sequence is that of NAD kinase from Aromatoleum aromaticum (strain DSM 19018 / LMG 30748 / EbN1) (Azoarcus sp. (strain EbN1)).